We begin with the raw amino-acid sequence, 653 residues long: Fusexin 1 (653 aa).

An N-terminal signal peptide occupies residues methionine 1–alanine 23. At alanine 24–glycine 559 the chain is on the extracellular side. 4 disulfides stabilise this stretch: cysteine 126-cysteine 166, cysteine 397-cysteine 440, cysteine 467-cysteine 490, and cysteine 502-cysteine 519. The tract at residues aspartate 154–glutamine 159 is fusion loop. Residues alanine 560–valine 580 form a helical membrane-spanning segment. Residues glycine 581–aspartate 600 are Cytoplasmic-facing. 2 helical membrane passes run alanine 601–glutamine 621 and leucine 622–leucine 642. Over tyrosine 643–leucine 653 the chain is Cytoplasmic.

Belongs to the HAP2/GCS1 family. Fusexin 1 subfamily. As to quaternary structure, homotrimer stabilized by interdomain contacts and numerous Ca(2+) and Na(+) ions.

It is found in the cell surface. The protein resides in the cell membrane. Its function is as follows. Exhibits fusogenic activity. Mediates cell-cell fusion in mammalian cells (bilateral fusion). The protein is Fusexin 1 of Haloferax sp. (strain Q22).